Consider the following 118-residue polypeptide: Large ribosomal subunit protein uL18 (118 aa).

It belongs to the universal ribosomal protein uL18 family. As to quaternary structure, part of the 50S ribosomal subunit; part of the 5S rRNA/L5/L18/L25 subcomplex. Contacts the 5S and 23S rRNAs.

In terms of biological role, this is one of the proteins that bind and probably mediate the attachment of the 5S RNA into the large ribosomal subunit, where it forms part of the central protuberance. The chain is Large ribosomal subunit protein uL18 from Campylobacter jejuni subsp. jejuni serotype O:2 (strain ATCC 700819 / NCTC 11168).